A 499-amino-acid polypeptide reads, in one-letter code: Replication factor C large subunit (499 aa).

50–57 (GPPGVGKT) provides a ligand contact to ATP. The segment at 428 to 499 (EAERRVEAAE…QATLFDFLKK (72 aa)) is disordered. Residues 436-472 (AEEEETMEAGEPEEELEEVEEEELTEEELEEAEEEIE) are compositionally biased toward acidic residues. The span at 473 to 484 (TVGKKEKPEKEK) shows a compositional bias: basic and acidic residues.

The protein belongs to the activator 1 small subunits family. RfcL subfamily. As to quaternary structure, heteromultimer composed of small subunits (RfcS) and large subunits (RfcL).

Part of the RFC clamp loader complex which loads the PCNA sliding clamp onto DNA. The polypeptide is Replication factor C large subunit (Thermococcus kodakarensis (strain ATCC BAA-918 / JCM 12380 / KOD1) (Pyrococcus kodakaraensis (strain KOD1))).